Here is a 213-residue protein sequence, read N- to C-terminus: Orotate phosphoribosyltransferase (213 aa).

K26 provides a ligand contact to 5-phospho-alpha-D-ribose 1-diphosphate. 34–35 serves as a coordination point for orotate; the sequence is FF. 5-phospho-alpha-D-ribose 1-diphosphate-binding positions include 72-73, R99, K100, K103, H105, and 124-132; these read YK and DDVITAGTA. Orotate is bound by residues T128 and R156.

Belongs to the purine/pyrimidine phosphoribosyltransferase family. PyrE subfamily. In terms of assembly, homodimer. It depends on Mg(2+) as a cofactor.

It carries out the reaction orotidine 5'-phosphate + diphosphate = orotate + 5-phospho-alpha-D-ribose 1-diphosphate. It participates in pyrimidine metabolism; UMP biosynthesis via de novo pathway; UMP from orotate: step 1/2. Functionally, catalyzes the transfer of a ribosyl phosphate group from 5-phosphoribose 1-diphosphate to orotate, leading to the formation of orotidine monophosphate (OMP). In Salmonella agona (strain SL483), this protein is Orotate phosphoribosyltransferase.